A 239-amino-acid chain; its full sequence is Ribosomal RNA small subunit methyltransferase G (239 aa).

Residues glycine 78, phenylalanine 83, alanine 129–glutamate 130, and arginine 148 each bind S-adenosyl-L-methionine.

The protein belongs to the methyltransferase superfamily. RNA methyltransferase RsmG family.

Its subcellular location is the cytoplasm. Its function is as follows. Specifically methylates the N7 position of a guanine in 16S rRNA. This Clostridium botulinum (strain 657 / Type Ba4) protein is Ribosomal RNA small subunit methyltransferase G.